We begin with the raw amino-acid sequence, 129 residues long: Ropporin-1 (129 aa).

The region spanning 11 to 34 (PELPELLKTQPPDLIQWAAEYFGA) is the RIIa domain.

Belongs to the ropporin family. In terms of assembly, homodimer. Interacts with AKAP3. May interact with SPA17. Interacts with RHPN1. Interacts with FSCB; the interaction increases upon spermatozoa capacitation conditions. Interacts with CFAP61. Sumoylated, sumoylation decreases upon spermatozoa capacitation conditions.

It localises to the cell projection. The protein localises to the cilium. Its subcellular location is the flagellum. Functionally, important for male fertility. With ROPN1L, involved in fibrous sheath integrity and sperm motility, plays a role in PKA-dependent signaling processes required for spermatozoa capacitation. This is Ropporin-1 from Mesocricetus auratus (Golden hamster).